Consider the following 1010-residue polypeptide: Trifunctional purine biosynthetic protein adenosine-3 (1010 aa).

Ala2 is subject to N-acetylalanine. A Phosphoserine modification is found at Ser10. The ATP-grasp domain maps to 111–318 (KEFMDRHGIP…LYEVIQSTLD (208 aa)). ATP contacts are provided by residues 190–193 (EELL), Glu197, Arg220, and Asn229. Mg(2+) contacts are provided by Glu288 and Asn290. The residue at position 350 (Lys350) is an N6-acetyllysine. The segment at 434–809 (SLTYKESGVD…HFSFEKKKAR (376 aa)) is AIRS domain. Ser440 carries the post-translational modification Phosphoserine. Position 682 is a phosphothreonine (Thr682). Residues Ser796 and Ser802 each carry the phosphoserine modification. The GART domain stretch occupies residues 810–1010 (VAVLISGTGS…NGKICWVKEE (201 aa)). 818 to 820 (GSN) serves as a coordination point for N(1)-(5-phospho-beta-D-ribosyl)glycinamide. Residues Arg871, 896 to 899 (MRIL), and Asn913 each bind (6R)-10-formyltetrahydrofolate. His915 functions as the Proton donor in the catalytic mechanism. Position 947 to 951 (947 to 951 (AEDVD)) interacts with (6R)-10-formyltetrahydrofolate. 977–980 (KLAE) is a binding site for N(1)-(5-phospho-beta-D-ribosyl)glycinamide.

This sequence in the N-terminal section; belongs to the GARS family. It in the central section; belongs to the AIR synthase family. In the C-terminal section; belongs to the GART family. As to quaternary structure, homodimer. It depends on Mg(2+) as a cofactor. Requires Mn(2+) as cofactor.

The catalysed reaction is 5-phospho-beta-D-ribosylamine + glycine + ATP = N(1)-(5-phospho-beta-D-ribosyl)glycinamide + ADP + phosphate + H(+). It catalyses the reaction N(1)-(5-phospho-beta-D-ribosyl)glycinamide + (6R)-10-formyltetrahydrofolate = N(2)-formyl-N(1)-(5-phospho-beta-D-ribosyl)glycinamide + (6S)-5,6,7,8-tetrahydrofolate + H(+). The enzyme catalyses 2-formamido-N(1)-(5-O-phospho-beta-D-ribosyl)acetamidine + ATP = 5-amino-1-(5-phospho-beta-D-ribosyl)imidazole + ADP + phosphate + H(+). The protein operates within purine metabolism; IMP biosynthesis via de novo pathway; 5-amino-1-(5-phospho-D-ribosyl)imidazole from N(2)-formyl-N(1)-(5-phospho-D-ribosyl)glycinamide: step 2/2. It functions in the pathway purine metabolism; IMP biosynthesis via de novo pathway; N(1)-(5-phospho-D-ribosyl)glycinamide from 5-phospho-alpha-D-ribose 1-diphosphate: step 2/2. It participates in purine metabolism; IMP biosynthesis via de novo pathway; N(2)-formyl-N(1)-(5-phospho-D-ribosyl)glycinamide from N(1)-(5-phospho-D-ribosyl)glycinamide (10-formyl THF route): step 1/1. In terms of biological role, trifunctional enzyme that catalyzes three distinct reactions as part of the 'de novo' inosine monophosphate biosynthetic pathway. This chain is Trifunctional purine biosynthetic protein adenosine-3 (GART), found in Homo sapiens (Human).